The chain runs to 507 residues: 3-[(3aS,4S,7aS)-7a-methyl-1,5-dioxo-octahydro-1H-inden-4-yl]propanoyl:CoA ligase (507 aa).

ATP contacts are provided by residues 177–185 (TSGTTGRSK), Asp391, Arg406, and Lys497.

Belongs to the ATP-dependent AMP-binding enzyme family.

It catalyses the reaction 3-[(3aS,4S,7aS)-7a-methyl-1,5-dioxo-octahydro-1H-inden-4-yl]propanoate + ATP + CoA = 3-[(3aS,4S,7aS)-7a-methyl-1,5-dioxo-octahydro-1H-inden-4-yl]propanoyl-CoA + AMP + diphosphate. The enzyme catalyses 5-hydroxy-3-[(3aS,4S,5R,7aS)-7a-methyl-1,5-dioxo-octahydro-1H-inden-4-yl]propanoate + ATP + CoA = 3-[(3aS,4S,5R,7aS)-5-hydroxy-7a-methyl-1-oxo-octahydro-1H-inden-4-yl]propanoyl-CoA + AMP + diphosphate. Involved in the catabolism of the rings C and D of cholesterol. Catalyzes the ATP-dependent CoA thioesterification of 3aalpha-H-4alpha(3'-propanoate)-7abeta-methylhexahydro-1,5-indanedione (HIP) to yield HIP-CoA. It can also use the hydroxylated analogs of HIP, 5alpha-OH HIP and 1beta-OH HIP. It requires that the side chain at C17 is completely removed. This chain is 3-[(3aS,4S,7aS)-7a-methyl-1,5-dioxo-octahydro-1H-inden-4-yl]propanoyl:CoA ligase, found in Mycobacterium tuberculosis (strain ATCC 25618 / H37Rv).